Here is an 860-residue protein sequence, read N- to C-terminus: Paladin (860 aa).

The segment at 1-24 (MGTTASAAPQATLHERLHSDSMTD) is disordered. A lipid anchor (N-myristoyl glycine) is attached at Gly2. Residues 13 to 24 (LHERLHSDSMTD) are compositionally biased toward basic and acidic residues.

Belongs to the paladin family.

It localises to the cytoplasm. Its subcellular location is the cytosol. This Danio rerio (Zebrafish) protein is Paladin (pald1).